Reading from the N-terminus, the 65-residue chain is MSGGLKEQITGKVEKTKGQVKEGIGEVTEDRELKNEGKWEKTKGTIKEKVGKVKQKISDGLDNKE.

The segment at 1 to 28 (MSGGLKEQITGKVEKTKGQVKEGIGEVT) is disordered. Residues 12-28 (KVEKTKGQVKEGIGEVT) show a composition bias toward basic and acidic residues.

It belongs to the UPF0337 (CsbD) family.

The sequence is that of UPF0337 protein BCE_1081 from Bacillus cereus (strain ATCC 10987 / NRS 248).